We begin with the raw amino-acid sequence, 199 residues long: Imidazoleglycerol-phosphate dehydratase (199 aa).

The protein belongs to the imidazoleglycerol-phosphate dehydratase family.

The protein resides in the cytoplasm. The catalysed reaction is D-erythro-1-(imidazol-4-yl)glycerol 3-phosphate = 3-(imidazol-4-yl)-2-oxopropyl phosphate + H2O. Its pathway is amino-acid biosynthesis; L-histidine biosynthesis; L-histidine from 5-phospho-alpha-D-ribose 1-diphosphate: step 6/9. In Roseiflexus sp. (strain RS-1), this protein is Imidazoleglycerol-phosphate dehydratase.